We begin with the raw amino-acid sequence, 112 residues long: uncharacterized protein (112 aa).

One can recognise an HIT domain in the interval 5-112 (IFQKIIKGII…LLGGKKLNKI (108 aa)). The Histidine triad motif signature appears at 98–102 (HLHLH).

This is an uncharacterized protein from Buchnera aphidicola subsp. Baizongia pistaciae (strain Bp).